A 158-amino-acid polypeptide reads, in one-letter code: Cyclic pyranopterin monophosphate synthase (158 aa).

Substrate-binding positions include 74–76 (MCH) and 112–113 (ME). The active site involves aspartate 127.

Belongs to the MoaC family. In terms of assembly, homohexamer; trimer of dimers.

It carries out the reaction (8S)-3',8-cyclo-7,8-dihydroguanosine 5'-triphosphate = cyclic pyranopterin phosphate + diphosphate. Its pathway is cofactor biosynthesis; molybdopterin biosynthesis. Functionally, catalyzes the conversion of (8S)-3',8-cyclo-7,8-dihydroguanosine 5'-triphosphate to cyclic pyranopterin monophosphate (cPMP). The sequence is that of Cyclic pyranopterin monophosphate synthase from Thermoanaerobacter pseudethanolicus (strain ATCC 33223 / 39E) (Clostridium thermohydrosulfuricum).